A 317-amino-acid chain; its full sequence is Ribosomal protein L11 methyltransferase (317 aa).

S-adenosyl-L-methionine is bound by residues Thr-139, Gly-162, Asp-184, and Asn-226. The segment at 274-297 (EHVATRPDPASPGGDRRAGRGDAG) is disordered.

The protein belongs to the methyltransferase superfamily. PrmA family.

It is found in the cytoplasm. It carries out the reaction L-lysyl-[protein] + 3 S-adenosyl-L-methionine = N(6),N(6),N(6)-trimethyl-L-lysyl-[protein] + 3 S-adenosyl-L-homocysteine + 3 H(+). Functionally, methylates ribosomal protein L11. The chain is Ribosomal protein L11 methyltransferase from Sorangium cellulosum (strain So ce56) (Polyangium cellulosum (strain So ce56)).